A 126-amino-acid chain; its full sequence is Glycine cleavage system H protein (126 aa).

The region spanning 20–102 (IGTIGITDYA…LGDGWFFKVR (83 aa)) is the Lipoyl-binding domain. Lysine 61 carries the N6-lipoyllysine modification.

It belongs to the GcvH family. The glycine cleavage system is composed of four proteins: P, T, L and H. (R)-lipoate is required as a cofactor.

Its function is as follows. The glycine cleavage system catalyzes the degradation of glycine. The H protein shuttles the methylamine group of glycine from the P protein to the T protein. This is Glycine cleavage system H protein from Rhodospirillum rubrum (strain ATCC 11170 / ATH 1.1.1 / DSM 467 / LMG 4362 / NCIMB 8255 / S1).